We begin with the raw amino-acid sequence, 466 residues long: 3-isopropylmalate dehydratase large subunit (466 aa).

The [4Fe-4S] cluster site is built by Cys347, Cys407, and Cys410.

Belongs to the aconitase/IPM isomerase family. LeuC type 1 subfamily. As to quaternary structure, heterodimer of LeuC and LeuD. The cofactor is [4Fe-4S] cluster.

It carries out the reaction (2R,3S)-3-isopropylmalate = (2S)-2-isopropylmalate. It functions in the pathway amino-acid biosynthesis; L-leucine biosynthesis; L-leucine from 3-methyl-2-oxobutanoate: step 2/4. Functionally, catalyzes the isomerization between 2-isopropylmalate and 3-isopropylmalate, via the formation of 2-isopropylmaleate. This is 3-isopropylmalate dehydratase large subunit from Escherichia coli O127:H6 (strain E2348/69 / EPEC).